Consider the following 348-residue polypeptide: Protein RecA (348 aa).

Residue Gly-66–Thr-73 coordinates ATP.

It belongs to the RecA family.

The protein resides in the cytoplasm. Functionally, can catalyze the hydrolysis of ATP in the presence of single-stranded DNA, the ATP-dependent uptake of single-stranded DNA by duplex DNA, and the ATP-dependent hybridization of homologous single-stranded DNAs. It interacts with LexA causing its activation and leading to its autocatalytic cleavage. The polypeptide is Protein RecA (Neisseria meningitidis serogroup A / serotype 4A (strain DSM 15465 / Z2491)).